Consider the following 196-residue polypeptide: Probable nicotinate-nucleotide adenylyltransferase (196 aa).

This sequence belongs to the NadD family.

The catalysed reaction is nicotinate beta-D-ribonucleotide + ATP + H(+) = deamido-NAD(+) + diphosphate. The protein operates within cofactor biosynthesis; NAD(+) biosynthesis; deamido-NAD(+) from nicotinate D-ribonucleotide: step 1/1. Catalyzes the reversible adenylation of nicotinate mononucleotide (NaMN) to nicotinic acid adenine dinucleotide (NaAD). This chain is Probable nicotinate-nucleotide adenylyltransferase, found in Caldicellulosiruptor bescii (strain ATCC BAA-1888 / DSM 6725 / KCTC 15123 / Z-1320) (Anaerocellum thermophilum).